Consider the following 225-residue polypeptide: Biosynthetic peptidoglycan transglycosylase (225 aa).

The helical transmembrane segment at 9 to 29 (LLIFIGAILLIQLWIFSSLVW) threads the bilayer.

It belongs to the glycosyltransferase 51 family.

It is found in the cell inner membrane. It catalyses the reaction [GlcNAc-(1-&gt;4)-Mur2Ac(oyl-L-Ala-gamma-D-Glu-L-Lys-D-Ala-D-Ala)](n)-di-trans,octa-cis-undecaprenyl diphosphate + beta-D-GlcNAc-(1-&gt;4)-Mur2Ac(oyl-L-Ala-gamma-D-Glu-L-Lys-D-Ala-D-Ala)-di-trans,octa-cis-undecaprenyl diphosphate = [GlcNAc-(1-&gt;4)-Mur2Ac(oyl-L-Ala-gamma-D-Glu-L-Lys-D-Ala-D-Ala)](n+1)-di-trans,octa-cis-undecaprenyl diphosphate + di-trans,octa-cis-undecaprenyl diphosphate + H(+). Its pathway is cell wall biogenesis; peptidoglycan biosynthesis. In terms of biological role, peptidoglycan polymerase that catalyzes glycan chain elongation from lipid-linked precursors. The polypeptide is Biosynthetic peptidoglycan transglycosylase (Acinetobacter baumannii (strain SDF)).